A 574-amino-acid chain; its full sequence is Thiol:disulfide interchange protein DsbD (574 aa).

The signal sequence occupies residues 1-19; that stretch reads MAHRILTLILLFCSAHASA. The cysteines at positions 122 and 128 are disulfide-linked. Residues 147 to 169 are disordered; sequence VKANAATPSAATGEQTRVNSDSP. Positions 152-169 are enriched in polar residues; sequence ATPSAATGEQTRVNSDSP. A run of 7 helical transmembrane segments spans residues 173-193, 218-238, 253-273, 306-326, 333-353, 367-387, and 399-419; these read LPFS…TPCV, LLAF…GLVV, WVLV…FGLF, IAGL…LLYI, WLGG…LILV, WMEQ…VFLL, and LWSV…LNAT. Cys-192 and Cys-314 are joined by a disulfide. Residues 430-574 form the Thioredoxin domain; it reads LLGAAMICAR…FATHLHNRLR (145 aa). The cysteines at positions 489 and 492 are disulfide-linked.

The protein belongs to the thioredoxin family. DsbD subfamily.

Its subcellular location is the cell inner membrane. The catalysed reaction is [protein]-dithiol + NAD(+) = [protein]-disulfide + NADH + H(+). The enzyme catalyses [protein]-dithiol + NADP(+) = [protein]-disulfide + NADPH + H(+). Its function is as follows. Required to facilitate the formation of correct disulfide bonds in some periplasmic proteins and for the assembly of the periplasmic c-type cytochromes. Acts by transferring electrons from cytoplasmic thioredoxin to the periplasm. This transfer involves a cascade of disulfide bond formation and reduction steps. This Cronobacter sakazakii (strain ATCC BAA-894) (Enterobacter sakazakii) protein is Thiol:disulfide interchange protein DsbD.